The following is a 188-amino-acid chain: Small ribosomal subunit protein eS8 (188 aa).

Positions 1-34 are disordered; sequence MGISRDSRHKRRLTGGRYPVHKKKRKYELGRPSS. Residues 7 to 26 are compositionally biased toward basic residues; the sequence is SRHKRRLTGGRYPVHKKKRK.

Belongs to the eukaryotic ribosomal protein eS8 family.

The polypeptide is Small ribosomal subunit protein eS8 (RPS8) (Theileria parva (East coast fever infection agent)).